Here is a 160-residue protein sequence, read N- to C-terminus: 6,7-dimethyl-8-ribityllumazine synthase (160 aa).

Residues Trp-27, 59–61 (AIE), and 81–83 (VVI) each bind 5-amino-6-(D-ribitylamino)uracil. 86 to 87 (ET) is a binding site for (2S)-2-hydroxy-3-oxobutyl phosphate. His-89 acts as the Proton donor in catalysis. Asn-114 lines the 5-amino-6-(D-ribitylamino)uracil pocket. Arg-128 serves as a coordination point for (2S)-2-hydroxy-3-oxobutyl phosphate.

The protein belongs to the DMRL synthase family. As to quaternary structure, homopentamer.

It catalyses the reaction (2S)-2-hydroxy-3-oxobutyl phosphate + 5-amino-6-(D-ribitylamino)uracil = 6,7-dimethyl-8-(1-D-ribityl)lumazine + phosphate + 2 H2O + H(+). It functions in the pathway cofactor biosynthesis; riboflavin biosynthesis; riboflavin from 2-hydroxy-3-oxobutyl phosphate and 5-amino-6-(D-ribitylamino)uracil: step 1/2. In terms of biological role, catalyzes the formation of 6,7-dimethyl-8-ribityllumazine by condensation of 5-amino-6-(D-ribitylamino)uracil with 3,4-dihydroxy-2-butanone 4-phosphate. This is the penultimate step in the biosynthesis of riboflavin. The polypeptide is 6,7-dimethyl-8-ribityllumazine synthase (Mycobacterium ulcerans (strain Agy99)).